We begin with the raw amino-acid sequence, 484 residues long: tRNA sulfurtransferase (484 aa).

The region spanning Gly-62 to Arg-166 is the THUMP domain. Residues Leu-184 to Ile-185, Lys-266, Gly-288, and Gln-297 each bind ATP. The cysteines at positions 345 and 456 are disulfide-linked. A Rhodanese domain is found at Pro-404–Pro-482. Residue Cys-456 is the Cysteine persulfide intermediate of the active site.

The protein belongs to the ThiI family.

The protein localises to the cytoplasm. The enzyme catalyses [ThiI sulfur-carrier protein]-S-sulfanyl-L-cysteine + a uridine in tRNA + 2 reduced [2Fe-2S]-[ferredoxin] + ATP + H(+) = [ThiI sulfur-carrier protein]-L-cysteine + a 4-thiouridine in tRNA + 2 oxidized [2Fe-2S]-[ferredoxin] + AMP + diphosphate. It carries out the reaction [ThiS sulfur-carrier protein]-C-terminal Gly-Gly-AMP + S-sulfanyl-L-cysteinyl-[cysteine desulfurase] + AH2 = [ThiS sulfur-carrier protein]-C-terminal-Gly-aminoethanethioate + L-cysteinyl-[cysteine desulfurase] + A + AMP + 2 H(+). It functions in the pathway cofactor biosynthesis; thiamine diphosphate biosynthesis. Functionally, catalyzes the ATP-dependent transfer of a sulfur to tRNA to produce 4-thiouridine in position 8 of tRNAs, which functions as a near-UV photosensor. Also catalyzes the transfer of sulfur to the sulfur carrier protein ThiS, forming ThiS-thiocarboxylate. This is a step in the synthesis of thiazole, in the thiamine biosynthesis pathway. The sulfur is donated as persulfide by IscS. The protein is tRNA sulfurtransferase of Marinobacter nauticus (strain ATCC 700491 / DSM 11845 / VT8) (Marinobacter aquaeolei).